The sequence spans 288 residues: General transcription factor IIE subunit 2 (288 aa).

The tract at residues 16 to 56 (ALTTPAVEKRPSASSESSKKKRAKLELSSTSGSKPSSDGSN) is disordered. A compositionally biased stretch (low complexity) spans 41–56 (ELSSTSGSKPSSDGSN). The TFIIE beta DNA-binding region spans 63–143 (SLSGSSGYKF…YAFKPKYNLK (81 aa)).

Belongs to the TFIIE beta subunit family. Tetramer of two alpha and two beta chains.

Its subcellular location is the nucleus. Functionally, recruits TFIIH to the initiation complex and stimulates the RNA polymerase II C-terminal domain kinase and DNA-dependent ATPase activities of TFIIH. Both TFIIH and TFIIE are required for promoter clearance by RNA polymerase. The sequence is that of General transcription factor IIE subunit 2 (gtf2e2) from Xenopus laevis (African clawed frog).